A 468-amino-acid chain; its full sequence is Bifunctional protein HldE (468 aa).

Residues 1-315 form a ribokinase region; the sequence is MAKKVEILVV…ELLRSRANAE (315 aa). 192-195 provides a ligand contact to ATP; sequence NRKE. Aspartate 260 is an active-site residue. A cytidylyltransferase region spans residues 340–468; sequence FTNGCFDILH…IVKRIKDADK (129 aa).

It in the N-terminal section; belongs to the carbohydrate kinase PfkB family. In the C-terminal section; belongs to the cytidylyltransferase family. Homodimer.

The enzyme catalyses D-glycero-beta-D-manno-heptose 7-phosphate + ATP = D-glycero-beta-D-manno-heptose 1,7-bisphosphate + ADP + H(+). It catalyses the reaction D-glycero-beta-D-manno-heptose 1-phosphate + ATP + H(+) = ADP-D-glycero-beta-D-manno-heptose + diphosphate. It functions in the pathway nucleotide-sugar biosynthesis; ADP-L-glycero-beta-D-manno-heptose biosynthesis; ADP-L-glycero-beta-D-manno-heptose from D-glycero-beta-D-manno-heptose 7-phosphate: step 1/4. Its pathway is nucleotide-sugar biosynthesis; ADP-L-glycero-beta-D-manno-heptose biosynthesis; ADP-L-glycero-beta-D-manno-heptose from D-glycero-beta-D-manno-heptose 7-phosphate: step 3/4. Catalyzes the phosphorylation of D-glycero-D-manno-heptose 7-phosphate at the C-1 position to selectively form D-glycero-beta-D-manno-heptose-1,7-bisphosphate. In terms of biological role, catalyzes the ADP transfer from ATP to D-glycero-beta-D-manno-heptose 1-phosphate, yielding ADP-D-glycero-beta-D-manno-heptose. The sequence is that of Bifunctional protein HldE from Campylobacter curvus (strain 525.92).